We begin with the raw amino-acid sequence, 1186 residues long: Probable inactive serine/threonine-protein kinase DDB_G0293184 (1186 aa).

Positions 1–12 (MEQEDQQYEEDS) are enriched in acidic residues. 2 disordered regions span residues 1–55 (MEQE…NNDS) and 99–122 (MEQQ…NTNF). Low complexity-rich tracts occupy residues 34-48 (TTTE…TTPT) and 99-110 (MEQQQQQQHLQP). A Protein kinase domain is found at 173-437 (YESPPTLGKY…VHDLLRHPWL (265 aa)). ATP is bound by residues 179-187 (LGKYDKVIL) and Lys-205. Disordered regions lie at residues 447–468 (SSSS…GNVN) and 530–551 (YNNY…NECG). A compositionally biased stretch (polar residues) spans 453 to 468 (QAHPTVQSNNLNGNVN). Over residues 530-545 (YNNYNNNNNNNNNTND) the composition is skewed to low complexity. Positions 631-659 (LKRTNQMANDLGRKYEILQSNIKRLEDYL) form a coiled coil. The span at 766-784 (NNLDPSNNNESVNLSTSPG) shows a compositional bias: polar residues. Disordered stretches follow at residues 766-911 (NNLD…NGNN) and 959-988 (ENKK…GDVS). The span at 785–836 (SLVNSNSNPSISNSLNNNNNNNNNNNNNNNGNPNVIITTNNNCNSNSNGNNI) shows a compositional bias: low complexity. Over residues 847 to 896 (KEVKEGKEIKEIKEPKEKDKDKEKDKDKEKDKDKEKDKDKEKEKDKDKEN) the composition is skewed to basic and acidic residues. Residues 875 to 909 (EKDKDKEKDKDKEKEKDKDKENNNNNNSNNNNNNG) are a coiled coil. Residues 897 to 911 (NNNNNSNNNNNNGNN) show a composition bias toward low complexity. The span at 969–978 (LDSTNKQSPG) shows a compositional bias: polar residues. One can recognise a Rho-GAP domain in the interval 1004-1186 (VRLDDLMTRE…LSFPKFNLSV (183 aa)).

The protein belongs to the protein kinase superfamily. STE Ser/Thr protein kinase family.

The chain is Probable inactive serine/threonine-protein kinase DDB_G0293184 from Dictyostelium discoideum (Social amoeba).